Here is a 348-residue protein sequence, read N- to C-terminus: Beta-hexosaminidase (348 aa).

Residues Asp64, Arg72, Arg138, and 168–169 (KH) contribute to the substrate site. His181 acts as the Proton donor/acceptor in catalysis. Catalysis depends on Asp252, which acts as the Nucleophile.

The protein belongs to the glycosyl hydrolase 3 family. NagZ subfamily.

It localises to the cytoplasm. The catalysed reaction is Hydrolysis of terminal non-reducing N-acetyl-D-hexosamine residues in N-acetyl-beta-D-hexosaminides.. The protein operates within cell wall biogenesis; peptidoglycan recycling. In terms of biological role, plays a role in peptidoglycan recycling by cleaving the terminal beta-1,4-linked N-acetylglucosamine (GlcNAc) from peptide-linked peptidoglycan fragments, giving rise to free GlcNAc, anhydro-N-acetylmuramic acid and anhydro-N-acetylmuramic acid-linked peptides. The polypeptide is Beta-hexosaminidase (Alkalilimnicola ehrlichii (strain ATCC BAA-1101 / DSM 17681 / MLHE-1)).